The following is a 383-amino-acid chain: Lipid-A-disaccharide synthase (383 aa).

Belongs to the LpxB family.

It carries out the reaction a lipid X + a UDP-2-N,3-O-bis[(3R)-3-hydroxyacyl]-alpha-D-glucosamine = a lipid A disaccharide + UDP + H(+). Its pathway is bacterial outer membrane biogenesis; LPS lipid A biosynthesis. Condensation of UDP-2,3-diacylglucosamine and 2,3-diacylglucosamine-1-phosphate to form lipid A disaccharide, a precursor of lipid A, a phosphorylated glycolipid that anchors the lipopolysaccharide to the outer membrane of the cell. The sequence is that of Lipid-A-disaccharide synthase from Alcanivorax borkumensis (strain ATCC 700651 / DSM 11573 / NCIMB 13689 / SK2).